A 507-amino-acid chain; its full sequence is GMP synthase [glutamine-hydrolyzing] (507 aa).

Residues threonine 9–glycine 202 enclose the Glutamine amidotransferase type-1 domain. Residue cysteine 86 is the Nucleophile of the active site. Active-site residues include histidine 176 and glutamate 178. In terms of domain architecture, GMPS ATP-PPase spans tryptophan 203 to arginine 395. An ATP-binding site is contributed by serine 230–serine 236.

Homodimer.

It carries out the reaction XMP + L-glutamine + ATP + H2O = GMP + L-glutamate + AMP + diphosphate + 2 H(+). It functions in the pathway purine metabolism; GMP biosynthesis; GMP from XMP (L-Gln route): step 1/1. Its function is as follows. Catalyzes the synthesis of GMP from XMP. The protein is GMP synthase [glutamine-hydrolyzing] of Brucella melitensis biotype 1 (strain ATCC 23456 / CCUG 17765 / NCTC 10094 / 16M).